Reading from the N-terminus, the 216-residue chain is Small ribosomal subunit protein uS3 (216 aa).

One can recognise a KH type-2 domain in the interval 39–111; the sequence is IYKFFDKLVR…DINLQVSLLK (73 aa).

Belongs to the universal ribosomal protein uS3 family. Part of the 30S ribosomal subunit. Forms a tight complex with proteins S10 and S14.

Its function is as follows. Binds the lower part of the 30S subunit head. Binds mRNA in the 70S ribosome, positioning it for translation. The sequence is that of Small ribosomal subunit protein uS3 from Mycoplasmopsis agalactiae (strain NCTC 10123 / CIP 59.7 / PG2) (Mycoplasma agalactiae).